Reading from the N-terminus, the 244-residue chain is tRNA pseudouridine synthase A (244 aa).

D52 acts as the Nucleophile in catalysis. Position 110 (Y110) interacts with substrate.

This sequence belongs to the tRNA pseudouridine synthase TruA family. As to quaternary structure, homodimer.

The catalysed reaction is uridine(38/39/40) in tRNA = pseudouridine(38/39/40) in tRNA. Functionally, formation of pseudouridine at positions 38, 39 and 40 in the anticodon stem and loop of transfer RNAs. This Caldicellulosiruptor saccharolyticus (strain ATCC 43494 / DSM 8903 / Tp8T 6331) protein is tRNA pseudouridine synthase A.